A 488-amino-acid polypeptide reads, in one-letter code: Metalloreductase STEAP3 (488 aa).

Residues 1–207 (MSGEMDKPLI…AREVEAIPLR (207 aa)) are Cytoplasmic-facing. S11, S17, and S20 each carry phosphoserine. Residues 36 to 39 (SGDF), 58 to 59 (SR), 91 to 98 (VFREHYSS), N116, and A151 each bind NADP(+). Residues W152 and D160 each coordinate FAD. The chain crosses the membrane as a helical span at residues 208-228 (LLPSWKVPTLLALGLFVCFYA). Y229 lines the Fe(3+) pocket. The Vesicular segment spans residues 229 to 258 (YNFIRDVLQPYIRKDENKFYKMPLSVVNTT). An N-linked (GlcNAc...) asparagine glycan is attached at N256. Residues 259–279 (LPCVAYVLLSLVYLPGVLAAA) traverse the membrane as a helical segment. Positions 259–407 (LPCVAYVLLS…LGFVALMLST (149 aa)) constitute a Ferric oxidoreductase domain. Over 280-304 (LQLRRGTKYQRFPDWLDHWLQHRKQ) the chain is Cytoplasmic. Q281, R302, and K303 together coordinate FAD. The chain crosses the membrane as a helical span at residues 305–325 (IGLLSFFFAMLHALYSFCLPL). Residue H316 participates in heme b binding. A Fe(3+)-binding site is contributed by Y319. Residues 326 to 358 (RRSHRYDLVNLAVKQVLANKSRLWVEEEVWRME) lie on the Vesicular side of the membrane. Residues 359–379 (IYLSLGVLALGMLSLLAVTSI) form a helical membrane-spanning segment. Residue S378 coordinates FAD. The Cytoplasmic portion of the chain corresponds to 380–390 (PSIANSLNWKE). Residues 391 to 411 (FSFVQSTLGFVALMLSTMHTL) traverse the membrane as a helical segment. Q395 is an FAD binding site. H409 is a heme b binding site. At 412 to 433 (TYGWTRAFEENHYKFYLPPTFT) the chain is on the vesicular side. A helical membrane pass occupies residues 434–454 (LTLLLPCVIILAKGLFLLPCL). The Cytoplasmic segment spans residues 455-488 (SHRLTKIRRGWERDGAVKFMLPAGHTQGEKTSHV). S486 is modified (phosphoserine).

The protein belongs to the STEAP family. As to quaternary structure, homodimer. Interacts with BNIP3L, MYT1, RHBDL4/RHBDD1 and TCTP. FAD serves as cofactor. Heme b is required as a cofactor. In terms of processing, proteolytically cleaved by RHBDL4/RHBDD1. RHBDL4/RHBDD1-induced cleavage occurs at multiple sites in a glycosylation-independent manner. Post-translationally, glycosylated.

The protein resides in the endosome membrane. The enzyme catalyses 2 Fe(2+) + NADP(+) + H(+) = 2 Fe(3+) + NADPH. It catalyses the reaction 2 Cu(+) + NADP(+) + H(+) = 2 Cu(2+) + NADPH. Its function is as follows. Integral membrane protein that functions as a NADPH-dependent ferric-chelate reductase, using NADPH from one side of the membrane to reduce a Fe(3+) chelate that is bound on the other side of the membrane. Mediates sequential transmembrane electron transfer from NADPH to FAD and onto heme, and finally to the Fe(3+) chelate. Can also reduce Cu(2+) to Cu(1+). Mediates efficient transferrin-dependent iron uptake in erythroid cells. May play a role downstream of p53/TP53 to interface apoptosis and cell cycle progression. Indirectly involved in exosome secretion by facilitating the secretion of proteins such as TCTP. This is Metalloreductase STEAP3 (Steap3) from Rattus norvegicus (Rat).